A 225-amino-acid polypeptide reads, in one-letter code: MISWISGELVELWQTNQKFFLLINCQGLGYEIQVLESLFLKLKTNQITNKNITLWIKHIKKEDSDLLFGFSSKDQKNFFIEILNIRGVGSQIGMGILSKFSISEVINAINTQNKKLICSVPGIGQKMSERLILELKSKFRNELKIQEEKSKDEFHIKDNKINKIVSDIELTLKSLNYTKNEIKSILPIISKEIDSLTKKEKDTSFENLLMLAMNYLDNDSSNIVR.

Positions 1 to 71 (MISWISGELV…EDSDLLFGFS (71 aa)) are domain I. Residues 72-150 (SKDQKNFFIE…NELKIQEEKS (79 aa)) form a domain II region. Residues 151-161 (KDEFHIKDNKI) form a flexible linker region. The domain III stretch occupies residues 161–225 (INKIVSDIEL…LDNDSSNIVR (65 aa)).

This sequence belongs to the RuvA family. As to quaternary structure, homotetramer. Forms an RuvA(8)-RuvB(12)-Holliday junction (HJ) complex. HJ DNA is sandwiched between 2 RuvA tetramers; dsDNA enters through RuvA and exits via RuvB. An RuvB hexamer assembles on each DNA strand where it exits the tetramer. Each RuvB hexamer is contacted by two RuvA subunits (via domain III) on 2 adjacent RuvB subunits; this complex drives branch migration. In the full resolvosome a probable DNA-RuvA(4)-RuvB(12)-RuvC(2) complex forms which resolves the HJ.

The protein localises to the cytoplasm. Functionally, the RuvA-RuvB-RuvC complex processes Holliday junction (HJ) DNA during genetic recombination and DNA repair, while the RuvA-RuvB complex plays an important role in the rescue of blocked DNA replication forks via replication fork reversal (RFR). RuvA specifically binds to HJ cruciform DNA, conferring on it an open structure. The RuvB hexamer acts as an ATP-dependent pump, pulling dsDNA into and through the RuvAB complex. HJ branch migration allows RuvC to scan DNA until it finds its consensus sequence, where it cleaves and resolves the cruciform DNA. In Prochlorococcus marinus (strain MIT 9312), this protein is Holliday junction branch migration complex subunit RuvA.